The primary structure comprises 2067 residues: Dedicator of cytokinesis protein 11 (2067 aa).

Positions 162 to 269 constitute a PH domain; it reads GVMKQGWLQK…WVNTIKQALL (108 aa). Positions 274 to 302 are disordered; sequence DRRNGSETSEGSLDDDSSSQGKPESITES. Polar residues predominate over residues 291 to 302; the sequence is SSQGKPESITES. The 178-residue stretch at 643 to 820 folds into the C2 DOCK-type domain; that stretch reads NNHLYIYPQQ…PLFKVRAYVA (178 aa). Residues 1224-1267 form a disordered region; the sequence is SSTIVDKEPSGSVTQNGLSRRGESRGSMYGDPGTPDINELHRRG. Positions 1614 to 2040 constitute a DOCKER domain; that stretch reads RSYASTPELR…LSEIIHEQIF (427 aa).

It belongs to the DOCK family.

Guanine nucleotide-exchange factor (GEF) that activates CDC42 by exchanging bound GDP for free GTP. The polypeptide is Dedicator of cytokinesis protein 11 (Danio rerio (Zebrafish)).